Consider the following 281-residue polypeptide: Stomatin-4 (281 aa).

Residues 28 to 48 (WIITIISYLVVLFTLPLSAFF) traverse the membrane as a helical segment.

The protein belongs to the band 7/mec-2 family.

The protein resides in the membrane. In Caenorhabditis elegans, this protein is Stomatin-4 (sto-4).